The chain runs to 371 residues: NDMA-dependent alcohol dehydrogenase (371 aa).

Zn(2+)-binding residues include Cys40, His61, Cys91, Cys94, Cys97, Cys105, and Cys167.

It belongs to the zinc-containing alcohol dehydrogenase family. As to quaternary structure, homotrimer. NADH is required as a cofactor.

It carries out the reaction N,N-dimethyl-4-nitrosoaniline + a primary alcohol = 4-(hydroxylamino)-N,N-dimethylaniline + an aldehyde. It catalyses the reaction ethanol + A = acetaldehyde + AH2. Its activity is regulated as follows. Inhibited by trans-4-(N,N-dimethylamino)-cinnamaldehyde through direct binding to the catalytic zinc ion in a substrate-like geometry. Isobutyramide acts as a competitive inhibitor with respect to the electron acceptor NDMA. Acetaldehyde, AMP, ADP, ATP, as well as CuSO(4), FeSO(4), HgCl(2), NiCl(2), ZnSO(4), KCN, and NaN(3) are additional inhibitors of the catalytic activity. Functionally, catalytically different from common alcohol dehydrogenases. Effective in oxidizing ethanol, other primary alcohols and benzylalcohol only in the presence of p-nitroso-N,N-dimethylaniline (NDMA) as an electron acceptor. NADH acts as a cofactor here instead as a coenzyme. The polypeptide is NDMA-dependent alcohol dehydrogenase (Amycolatopsis methanolica).